The primary structure comprises 315 residues: MSDSLRIIFAGTPDFAARHLDALLSSGHEVVGVFTQPDRPAGRGNKLTPSPVKVLAEQHNIPIFQPKSLRPAENQAMVQALDADVMVVVAYGLILPQPVLSMPRLGCINVHGSLLPLWRGAAPIQRALWAGDSETGVTIMQMDVGLDTGAMLHKISCPILPQDTSATLYDKLAELGPRGLLETLELLADGSAVAEAQNDALATYAEKLSKEEARLNWQLSAEQLERCIRAFNPWPVSYFTVDEQPVKVWKAEVITTAHSTLPGTILQADKQGIQVATAVGILNIQELQPAGKKVMSAQDLLNSRREWFVPGNTLD.

(6S)-5,6,7,8-tetrahydrofolate is bound at residue 113–116 (SLLP).

The protein belongs to the Fmt family.

It carries out the reaction L-methionyl-tRNA(fMet) + (6R)-10-formyltetrahydrofolate = N-formyl-L-methionyl-tRNA(fMet) + (6S)-5,6,7,8-tetrahydrofolate + H(+). Attaches a formyl group to the free amino group of methionyl-tRNA(fMet). The formyl group appears to play a dual role in the initiator identity of N-formylmethionyl-tRNA by promoting its recognition by IF2 and preventing the misappropriation of this tRNA by the elongation apparatus. In Pectobacterium carotovorum subsp. carotovorum (strain PC1), this protein is Methionyl-tRNA formyltransferase.